A 318-amino-acid polypeptide reads, in one-letter code: tRNA uridine(34) hydroxylase (318 aa).

Positions 123–217 (EDDDTVIIDA…YGKDPETKGQ (95 aa)) constitute a Rhodanese domain. Catalysis depends on Cys177, which acts as the Cysteine persulfide intermediate.

This sequence belongs to the TrhO family.

It carries out the reaction uridine(34) in tRNA + AH2 + O2 = 5-hydroxyuridine(34) in tRNA + A + H2O. Catalyzes oxygen-dependent 5-hydroxyuridine (ho5U) modification at position 34 in tRNAs. The polypeptide is tRNA uridine(34) hydroxylase (Staphylococcus aureus (strain MRSA252)).